The following is a 388-amino-acid chain: Mannitol-1-phosphate 5-dehydrogenase (388 aa).

4 to 15 is an NAD(+) binding site; that stretch reads AVHFGAGNIGRG.

The protein belongs to the mannitol dehydrogenase family.

It catalyses the reaction D-mannitol 1-phosphate + NAD(+) = beta-D-fructose 6-phosphate + NADH + H(+). The chain is Mannitol-1-phosphate 5-dehydrogenase from Lactococcus lactis subsp. cremoris (strain SK11).